The chain runs to 328 residues: Gonadotropin-releasing hormone receptor (328 aa).

Residues 1 to 38 lie on the Extracellular side of the membrane; it reads MANSDSPEQNENHCSSINSSIPLTPGSLPTLTLSGKIR. Asn18 is a glycosylation site (N-linked (GlcNAc...) asparagine). The helical transmembrane segment at 39 to 58 threads the bilayer; that stretch reads VTVTFFLFLLSTIFNTSFLL. The Cytoplasmic segment spans residues 59 to 77; sequence KLQNWTQRKEKRKKLSRMK. Residues 78-97 traverse the membrane as a helical segment; that stretch reads LLLKHLTLANLLETLIVMPL. The Extracellular segment spans residues 98–115; sequence DGMWNITVQWYAGELLCK. Asn102 carries N-linked (GlcNAc...) asparagine glycosylation. The cysteines at positions 114 and 196 are disulfide-linked. The chain crosses the membrane as a helical span at residues 116–137; sequence VLSYLKLFSMYAPAFMMVVISL. Over 138 to 164 the chain is Cytoplasmic; the sequence is DRSLAITKPLAVKSNSKLGQFMIGLAW. Residues 165-184 traverse the membrane as a helical segment; the sequence is LLSSIFAGPQLYIFGMIHLA. The Extracellular segment spans residues 185 to 212; sequence DDSGQTEGFSQCVTHCSFPQWWHQAFYN. A helical membrane pass occupies residues 213–232; sequence FFTFSCLFIIPLLIMVICNA. Residues 233–281 are Cytoplasmic-facing; that stretch reads KIIFTLTRVLHQDPHKLQLNQSKNNIPRARLRTLKMTVAFATSFTVCWT. The chain crosses the membrane as a helical span at residues 282 to 300; it reads PYYVLGIWYWFDPDMVNRV. Topologically, residues 301–306 are extracellular; that stretch reads SDPVNH. Residues 307-326 form a helical membrane-spanning segment; sequence FFFLFAFLNPCFNPLIYGYF. At 327–328 the chain is on the cytoplasmic side; that stretch reads SL.

The protein belongs to the G-protein coupled receptor 1 family.

It is found in the cell membrane. Functionally, receptor for gonadotropin releasing hormone (GnRH) that mediates the action of GnRH to stimulate the secretion of the gonadotropic hormones luteinizing hormone (LH) and follicle-stimulating hormone (FSH). This receptor mediates its action by association with G-proteins that activate a phosphatidylinositol-calcium second messenger system. This Bos mutus grunniens (Wild yak) protein is Gonadotropin-releasing hormone receptor (GNRHR).